We begin with the raw amino-acid sequence, 130 residues long: Small ribosomal subunit protein uS9 (130 aa).

It belongs to the universal ribosomal protein uS9 family.

The sequence is that of Small ribosomal subunit protein uS9 from Pseudomonas fluorescens (strain ATCC BAA-477 / NRRL B-23932 / Pf-5).